The following is a 109-amino-acid chain: MHANPTEETNILYFKFFSGRSIQVGNNRKSCKKLPDFEYISKGGIRCCIIHFFKIYFTPEMFFHLNDFPKLDNSGNETFILSRSLWVRFFLLVQLLVLCKNLNGKLKSK.

This is an uncharacterized protein from Caenorhabditis elegans.